The following is a 1855-amino-acid chain: Collagen alpha-1(XXVII) chain (1855 aa).

The signal sequence occupies residues 1–48; it reads MGLARATAGLGPCCPPAPALLGAGLRWGGFLFAWILVSFSCHLASTQG. Residues 49-618 constitute a propeptide, N-terminal propeptide; the sequence is APEDVDVLQR…PEPTPFLMLM (570 aa). One can recognise a Laminin G-like domain in the interval 81–246; it reads PSGFIFTQRA…NYCAHLRERC (166 aa). N-linked (GlcNAc...) asparagine glycans are attached at residues asparagine 281 and asparagine 349. Disordered stretches follow at residues 317–428, 511–580, 617–787, and 838–1617; these read DVSK…SATV, PPLG…SQLS, LMGP…GFPG, and GGVG…HPVQ. 2 stretches are compositionally biased toward polar residues: residues 382–427 and 520–532; these read LSVT…SSAT and MMPS…STPA. Over residues 563–573 the composition is skewed to basic and acidic residues; the sequence is TARDASPRDLT. Collagen-like domains follow at residues 619–673, 682–741, 751–810, 826–885, 886–945, 946–1005, 1006–1047, 1048–1105, 1108–1155, 1156–1215, 1216–1275, 1276–1330, and 1334–1393; these read GPPG…GDPG, GAKG…PGPV, GYIG…PGPP, GYPG…PGPM, GKAG…EGPM, GPPG…VGEK, GDRG…PGSR, GLPG…GAKG, GIPG…PGLP, GDSG…KGQE, GLKG…PGTP, GPKG…GEDG, and GAPG…KGSK. Positions 619–1612 are triple-helical region; that stretch reads GPPGSKGDCG…RGRPGPPGPP (994 aa). Residues 630–663 are compositionally biased toward pro residues; that stretch reads PGPPGLPGLPGSPGPRGPRGPPGPFGNPGLPGPP. The span at 708 to 728 shows a compositional bias: low complexity; the sequence is PGAAGHPGEQGQPGPEGSPGA. Low complexity predominate over residues 905 to 918; sequence FPGDIGPPGDNGPE. The span at 1027–1036 shows a compositional bias: gly residues; it reads GTPGGVGDPG. Composition is skewed to low complexity over residues 1083–1095, 1121–1131, and 1161–1176; these read RGRP…QGAA, LPGEPGSQGPQ, and KGDL…QGLI. 3 stretches are compositionally biased toward basic and acidic residues: residues 1196–1221, 1320–1332, and 1344–1354; these read LKGD…KGEE, KGEK…DGKT, and PVGDRGDRGEP. Composition is skewed to low complexity over residues 1369–1378 and 1404–1431; these read RGEPGQQGQP and KAGA…RQGP. 3 consecutive Collagen-like domains span residues 1433 to 1492, 1493 to 1552, and 1553 to 1612; these read GMAG…SGLP, GQLG…KGIQ, and GPRG…PGPP. Positions 1566–1581 are enriched in low complexity; it reads IIGPPGMLGPSGLPGP. Positions 1597–1614 are enriched in pro residues; it reads RGPPGPRGRPGPPGPPWH. Residues 1616–1855 constitute a propeptide, C-terminal propeptide; the sequence is VQFQQDDLEA…RLEVGPACFL (240 aa). A Fibrillar collagen NC1 domain is found at 1655–1855; that stretch reads GEIFKTLHYL…RLEVGPACFL (201 aa). Disulfide bonds link cysteine 1685/cysteine 1717, cysteine 1726/cysteine 1853, and cysteine 1762/cysteine 1806. Ca(2+)-binding residues include aspartate 1703, asparagine 1705, cysteine 1708, and aspartate 1711. Residue asparagine 1764 is glycosylated (N-linked (GlcNAc...) asparagine).

Belongs to the fibrillar collagen family.

It localises to the secreted. Its subcellular location is the extracellular space. The protein resides in the extracellular matrix. Plays a role during the calcification of cartilage and the transition of cartilage to bone. The protein is Collagen alpha-1(XXVII) chain (Col27a1) of Rattus norvegicus (Rat).